Reading from the N-terminus, the 856-residue chain is Envelope glycoprotein gp150 (856 aa).

Residues 1–785 (MAEGFAANRQ…WIGNIPQYLK (785 aa)) lie on the Extracellular side of the membrane. 17 N-linked (GlcNAc...) asparagine; by host glycosylation sites follow: asparagine 220, asparagine 258, asparagine 269, asparagine 274, asparagine 298, asparagine 330, asparagine 336, asparagine 342, asparagine 418, asparagine 422, asparagine 448, asparagine 481, asparagine 499, asparagine 518, asparagine 531, asparagine 548, and asparagine 551. The interval 616–636 (VMLALATVLSIAGAGTGATAI) is fusion peptide. The stretch at 643-693 (HQVLATHQEAIEKVTGALKINNLRLVTLEHQVLVIGLKVEAMEKFLYTAFA) forms a coiled coil. An immunosuppression region spans residues 662–680 (INNLRLVTLEHQVLVIGLK). N-linked (GlcNAc...) asparagine; by host glycans are attached at residues asparagine 717, asparagine 721, asparagine 729, and asparagine 737. A coiled-coil region spans residues 736 to 772 (YNQTKDLQQKFYEIIMDIEQNNVQGKTGIQQLQKWED). Residues 786–806 (GLLGGILGIGLGVLLLILCLP) traverse the membrane as a helical segment. The Cytoplasmic segment spans residues 807–856 (TLVDCIRNCIHKILGYTVIAMPEVEGEEIQPQMELRRNGRQCGMSEKEEE).

The mature envelope protein (Env) consists of a trimer of SU-TM heterodimers attached by noncovalent interactions or by a labile interchain disulfide bond. Specific enzymatic cleavages in vivo yield mature proteins. Envelope glycoproteins are synthesized as an inactive precursor that is N-glycosylated and processed likely by host cell furin or by a furin-like protease in the Golgi to yield the mature SU and TM proteins. The cleavage site between SU and TM requires the minimal sequence [KR]-X-[KR]-R.

The protein resides in the virion membrane. Its subcellular location is the host cell membrane. In terms of biological role, the surface protein (SU) attaches the virus to the host cell by binding to its receptor. This interaction triggers the refolding of the transmembrane protein (TM) and is thought to activate its fusogenic potential by unmasking its fusion peptide. Fusion occurs at the host cell plasma membrane. Functionally, the transmembrane protein (TM) acts as a class I viral fusion protein. Under the current model, the protein has at least 3 conformational states: pre-fusion native state, pre-hairpin intermediate state, and post-fusion hairpin state. During viral and target cell membrane fusion, the coiled coil regions (heptad repeats) assume a trimer-of-hairpins structure, positioning the fusion peptide in close proximity to the C-terminal region of the ectodomain. The formation of this structure appears to drive apposition and subsequent fusion of viral and target cell membranes. Membranes fusion leads to delivery of the nucleocapsid into the cytoplasm. The polypeptide is Envelope glycoprotein gp150 (env) (Felidae (cat family)).